A 106-amino-acid chain; its full sequence is UPF0091 protein RP266 (106 aa).

The protein belongs to the UPF0091 family.

The polypeptide is UPF0091 protein RP266 (Rickettsia prowazekii (strain Madrid E)).